The sequence spans 1172 residues: DNA-directed RNA polymerase subunit beta (1172 aa).

The protein belongs to the RNA polymerase beta chain family. The RNAP catalytic core consists of 2 alpha, 1 beta, 1 beta' and 1 omega subunit. When a sigma factor is associated with the core the holoenzyme is formed, which can initiate transcription.

The enzyme catalyses RNA(n) + a ribonucleoside 5'-triphosphate = RNA(n+1) + diphosphate. DNA-dependent RNA polymerase catalyzes the transcription of DNA into RNA using the four ribonucleoside triphosphates as substrates. The polypeptide is DNA-directed RNA polymerase subunit beta (Thermosipho melanesiensis (strain DSM 12029 / CIP 104789 / BI429)).